Reading from the N-terminus, the 398-residue chain is Bifunctional enzyme IspD/IspF (398 aa).

Residues 1–234 are 2-C-methyl-D-erythritol 4-phosphate cytidylyltransferase; the sequence is MPSSKRTAAI…ARLAAALGDI (234 aa). The tract at residues 235-398 is 2-C-methyl-D-erythritol 2,4-cyclodiphosphate synthase; sequence RTGTGYDVHA…LPWNDKGRDT (164 aa). 2 residues coordinate a divalent metal cation: Asp241 and His243. 4-CDP-2-C-methyl-D-erythritol 2-phosphate-binding positions include 241–243 and 267–268; these read DVH and HS. Residue His275 participates in a divalent metal cation binding. 4-CDP-2-C-methyl-D-erythritol 2-phosphate is bound by residues 289-291, 365-368, Phe372, and Arg375; these read DIG and TTSE.

The protein in the N-terminal section; belongs to the IspD/TarI cytidylyltransferase family. IspD subfamily. It in the C-terminal section; belongs to the IspF family. The cofactor is a divalent metal cation.

The catalysed reaction is 2-C-methyl-D-erythritol 4-phosphate + CTP + H(+) = 4-CDP-2-C-methyl-D-erythritol + diphosphate. It catalyses the reaction 4-CDP-2-C-methyl-D-erythritol 2-phosphate = 2-C-methyl-D-erythritol 2,4-cyclic diphosphate + CMP. The protein operates within isoprenoid biosynthesis; isopentenyl diphosphate biosynthesis via DXP pathway; isopentenyl diphosphate from 1-deoxy-D-xylulose 5-phosphate: step 2/6. It functions in the pathway isoprenoid biosynthesis; isopentenyl diphosphate biosynthesis via DXP pathway; isopentenyl diphosphate from 1-deoxy-D-xylulose 5-phosphate: step 4/6. In terms of biological role, bifunctional enzyme that catalyzes the formation of 4-diphosphocytidyl-2-C-methyl-D-erythritol from CTP and 2-C-methyl-D-erythritol 4-phosphate (MEP) (IspD), and catalyzes the conversion of 4-diphosphocytidyl-2-C-methyl-D-erythritol 2-phosphate (CDP-ME2P) to 2-C-methyl-D-erythritol 2,4-cyclodiphosphate (ME-CPP) with a corresponding release of cytidine 5-monophosphate (CMP) (IspF). The protein is Bifunctional enzyme IspD/IspF of Nitrobacter winogradskyi (strain ATCC 25391 / DSM 10237 / CIP 104748 / NCIMB 11846 / Nb-255).